Consider the following 182-residue polypeptide: Ribosome-recycling factor (182 aa).

This sequence belongs to the RRF family.

It is found in the cytoplasm. Functionally, responsible for the release of ribosomes from messenger RNA at the termination of protein biosynthesis. May increase the efficiency of translation by recycling ribosomes from one round of translation to another. This chain is Ribosome-recycling factor, found in Prochlorococcus marinus subsp. pastoris (strain CCMP1986 / NIES-2087 / MED4).